A 266-amino-acid chain; its full sequence is Chymotrypsin-like elastase family member 1 (266 aa).

Residues 1–16 (MLRLLVFTSLVLYGHS) form the signal peptide. Positions 17-26 (TQDFPETNAR) are cleaved as a propeptide — activation peptide. The region spanning 27 to 264 (VVGGTAVSKN…YISWINNAIA (238 aa)) is the Peptidase S1 domain. A disulfide bridge links Cys56 with Cys72. The Charge relay system role is filled by His71. Ca(2+)-binding residues include Asp85, Asn87, Gln90, and Glu95. A glycan (N-linked (GlcNAc...) asparagine) is linked at Asn87. Catalysis depends on Asp119, which acts as the Charge relay system. Disulfide bonds link Cys153–Cys220, Cys184–Cys200, and Cys210–Cys240. Ser214 serves as the catalytic Charge relay system. An N-linked (GlcNAc...) asparagine glycan is attached at Asn241.

This sequence belongs to the peptidase S1 family. Elastase subfamily. The cofactor is Ca(2+). As to expression, pancreas.

Its subcellular location is the secreted. It carries out the reaction Hydrolysis of proteins, including elastin. Preferential cleavage: Ala-|-Xaa.. Its function is as follows. Serine proteases that hydrolyze many proteins in addition to elastin. The sequence is that of Chymotrypsin-like elastase family member 1 (CELA1) from Bos taurus (Bovine).